Consider the following 537-residue polypeptide: CTP synthase (537 aa).

The tract at residues 1 to 268 (MPFKCIFLTG…ANFIGEKLKL (268 aa)) is amidoligase domain. Position 14 (Ser-14) interacts with CTP. UTP is bound at residue Ser-14. ATP-binding positions include 15-20 (SLGKGL) and Asp-72. Residues Asp-72 and Glu-142 each coordinate Mg(2+). Residues 149-151 (DIE), 188-193 (KSKPTQ), and Lys-224 each bind CTP. UTP contacts are provided by residues 188-193 (KSKPTQ) and Lys-224. Positions 293–533 (KIGVVGKYVQ…IEAALVYSKD (241 aa)) constitute a Glutamine amidotransferase type-1 domain. Gly-352 contacts L-glutamine. Cys-379 (nucleophile; for glutamine hydrolysis) is an active-site residue. L-glutamine is bound by residues 380 to 383 (LGMQ), Glu-403, and Arg-461. Catalysis depends on residues His-506 and Glu-508.

The protein belongs to the CTP synthase family. As to quaternary structure, homotetramer.

The catalysed reaction is UTP + L-glutamine + ATP + H2O = CTP + L-glutamate + ADP + phosphate + 2 H(+). It carries out the reaction L-glutamine + H2O = L-glutamate + NH4(+). The enzyme catalyses UTP + NH4(+) + ATP = CTP + ADP + phosphate + 2 H(+). It participates in pyrimidine metabolism; CTP biosynthesis via de novo pathway; CTP from UDP: step 2/2. Its activity is regulated as follows. Allosterically activated by GTP, when glutamine is the substrate; GTP has no effect on the reaction when ammonia is the substrate. The allosteric effector GTP functions by stabilizing the protein conformation that binds the tetrahedral intermediate(s) formed during glutamine hydrolysis. Inhibited by the product CTP, via allosteric rather than competitive inhibition. Functionally, catalyzes the ATP-dependent amination of UTP to CTP with either L-glutamine or ammonia as the source of nitrogen. Regulates intracellular CTP levels through interactions with the four ribonucleotide triphosphates. In Chlamydia pneumoniae (Chlamydophila pneumoniae), this protein is CTP synthase.